A 37-amino-acid polypeptide reads, in one-letter code: Antifungal protein 4 (37 aa).

It localises to the secreted. Its function is as follows. Possesses antifungal activity against P.infestans but not F.graminearum. The chain is Antifungal protein 4 from Malva parviflora (Little mallow).